The following is a 209-amino-acid chain: Geminin (209 aa).

The interval 1–79 (MNPSMKQKQE…PESSENKNLG (79 aa)) is disordered. Over residues 7 to 16 (QKQEEIKENI) the composition is skewed to basic and acidic residues. Residue Lys27 is modified to N6-acetyllysine. Ser34, Ser36, Ser49, Ser63, and Ser64 each carry phosphoserine. Residues 82–161 (TQESFDLMIK…AELIERLNGE (80 aa)) are necessary and sufficient for interaction with IDAS and CDT1. A coiled-coil region spans residues 94–144 (PSSQYWKEVAEKRRKALYEALKENEKLHKEIEQKDNEIARLKKENKELAEV). Positions 164-209 (DNFESLDNQEFDSEEETVEDSLVEDSEIGTCAEGTVSSSTDAKPCI) are disordered. The interval 170–190 (DNQEFDSEEETVEDSLVEDSE) is homeodomain binding. Residues 170 to 190 (DNQEFDSEEETVEDSLVEDSE) are compositionally biased toward acidic residues. A Phosphoserine; by CK2 modification is found at Ser184. The span at 198-209 (TVSSSTDAKPCI) shows a compositional bias: polar residues.

It belongs to the geminin family. As to quaternary structure, homotetramer. Interacts with CDT1; this inhibits binding of the MCM complex to origins of replication. The complex with CDT1 exists in two forms, a 'permissive' heterotrimer and an 'inhibitory' heterohexamer. Interacts (via coiled-coil domain) with IDAS (via coiled-coil domain); this targets GMNN to the nucleus. The heterodimer formed by GMNN and MCIDAS has much lower affinity for CDT1 than the GMNN homodimer. Interacts with a subset of Hox proteins, affinity increasing from anterior to posterior types, the strongest interaction being with HOXB1, HOXC9 and HOXD10. Interacts with LRWD1 from G1/S to mitosis. In terms of processing, phosphorylated during mitosis. Phosphorylation at Ser-184 by CK2 results in enhanced binding to Hox proteins and more potent inhibitory effect on Hox transcriptional activity.

The protein resides in the cytoplasm. It localises to the nucleus. Functionally, inhibits DNA replication by preventing the incorporation of MCM complex into pre-replication complex (pre-RC). It is degraded during the mitotic phase of the cell cycle. Its destruction at the metaphase-anaphase transition permits replication in the succeeding cell cycle. Inhibits histone acetyltransferase activity of KAT7/HBO1 in a CDT1-dependent manner, inhibiting histone H4 acetylation and DNA replication licensing. Inhibits the transcriptional activity of a subset of Hox proteins, enrolling them in cell proliferative control. This chain is Geminin (GMNN), found in Homo sapiens (Human).